We begin with the raw amino-acid sequence, 340 residues long: Probable allantoicase (340 aa).

The protein belongs to the allantoicase family.

It carries out the reaction allantoate + H2O = (S)-ureidoglycolate + urea. The protein operates within nitrogen metabolism; (S)-allantoin degradation; (S)-ureidoglycolate from allantoate (aminidohydrolase route): step 1/1. This Rhizobium meliloti (strain 1021) (Ensifer meliloti) protein is Probable allantoicase.